Here is a 603-residue protein sequence, read N- to C-terminus: Elongation factor 4 (603 aa).

Residues 7-189 (SRLRNFCIIA…AVVDRIPSPK (183 aa)) form the tr-type G domain. GTP-binding positions include 19–24 (DHGKST) and 136–139 (NKVD).

Belongs to the TRAFAC class translation factor GTPase superfamily. Classic translation factor GTPase family. LepA subfamily.

It localises to the cell inner membrane. It carries out the reaction GTP + H2O = GDP + phosphate + H(+). Its function is as follows. Required for accurate and efficient protein synthesis under certain stress conditions. May act as a fidelity factor of the translation reaction, by catalyzing a one-codon backward translocation of tRNAs on improperly translocated ribosomes. Back-translocation proceeds from a post-translocation (POST) complex to a pre-translocation (PRE) complex, thus giving elongation factor G a second chance to translocate the tRNAs correctly. Binds to ribosomes in a GTP-dependent manner. The polypeptide is Elongation factor 4 (Prochlorococcus marinus (strain NATL2A)).